Here is a 252-residue protein sequence, read N- to C-terminus: Phosphoglycolate phosphatase (252 aa).

The active-site Nucleophile is Asp-13. Asp-13, Asp-15, and Asp-192 together coordinate Mg(2+).

This sequence belongs to the HAD-like hydrolase superfamily. CbbY/CbbZ/Gph/YieH family. In terms of assembly, monomer. The cofactor is Mg(2+). Chloride serves as cofactor.

It catalyses the reaction 2-phosphoglycolate + H2O = glycolate + phosphate. The protein operates within organic acid metabolism; glycolate biosynthesis; glycolate from 2-phosphoglycolate: step 1/1. Specifically catalyzes the dephosphorylation of 2-phosphoglycolate. Is involved in the dissimilation of the intracellular 2-phosphoglycolate formed during the DNA repair of 3'-phosphoglycolate ends, a major class of DNA lesions induced by oxidative stress. In Shigella sonnei (strain Ss046), this protein is Phosphoglycolate phosphatase.